A 325-amino-acid chain; its full sequence is MEEEILWAEKYRPKSLDEIVNQKEIVERLKKFVKEKNMPHLLFAGPPGTGKTTAALALVRDLYGNNYRQYFLELNASDERGIDVIRNKVKEFARTVASNNVPFKVILLDEADNMTADAQQALRRTMELYTETTRFILACNYLSKIIEPIQSRTALFRFYPLKKEDVVNRLIQIAKNEKVEFDPKGIETIFDITQGDMRKAINVIQAASAYGKITVETVYKVLGLAQPKEIREMLHLALSGKFLQARDKLRELLINYGLSGEDIIKQVHKELTGNEISIPDDLKVILVDYAGEVEFRIMEGADDEIQLSAFLAKLALHAEKYSGGK.

Glycine 45–threonine 52 provides a ligand contact to ATP.

Belongs to the activator 1 small subunits family. RfcS subfamily. Heteromultimer composed of small subunits (RfcS) and large subunits (RfcL).

Its function is as follows. Part of the RFC clamp loader complex which loads the PCNA sliding clamp onto DNA. This is Replication factor C small subunit from Sulfolobus acidocaldarius (strain ATCC 33909 / DSM 639 / JCM 8929 / NBRC 15157 / NCIMB 11770).